Consider the following 439-residue polypeptide: Cell division protein FtsA (439 aa).

Belongs to the FtsA/MreB family. As to quaternary structure, self-interacts. Interacts with FtsZ.

It localises to the cell inner membrane. Its function is as follows. Cell division protein that is involved in the assembly of the Z ring. May serve as a membrane anchor for the Z ring. The polypeptide is Cell division protein FtsA (Shigella flexneri).